A 236-amino-acid polypeptide reads, in one-letter code: Eukaryotic translation initiation factor 3 subunit K (236 aa).

The PCI domain occupies 48-218; sequence CDCNANRTLL…EAKKAEIRED (171 aa).

Belongs to the eIF-3 subunit K family.

Its subcellular location is the cytoplasm. Functionally, component of the eukaryotic translation initiation factor 3 (eIF-3) complex, which is involved in protein synthesis of a specialized repertoire of mRNAs and, together with other initiation factors, stimulates binding of mRNA and methionyl-tRNAi to the 40S ribosome. The eIF-3 complex specifically targets and initiates translation of a subset of mRNAs involved in cell proliferation. The protein is Eukaryotic translation initiation factor 3 subunit K of Pyricularia oryzae (strain Y34) (Rice blast fungus).